A 338-amino-acid polypeptide reads, in one-letter code: Bifunctional methylenetetrahydrofolate dehydrogenase/cyclohydrolase 2, mitochondrial (338 aa).

Substrate-binding positions include 89–93 (YVRNK) and 136–138 (VQL). NAD(+) contacts are provided by residues 205–207 (GRS) and R238. 314 to 318 (PGGVG) is a binding site for substrate.

This sequence belongs to the tetrahydrofolate dehydrogenase/cyclohydrolase family. It depends on Mg(2+) as a cofactor. As to expression, widely expressed.

The protein resides in the mitochondrion inner membrane. The enzyme catalyses (6R)-5,10-methylene-5,6,7,8-tetrahydrofolate + NAD(+) = (6R)-5,10-methenyltetrahydrofolate + NADH. The catalysed reaction is (6R)-5,10-methenyltetrahydrofolate + H2O = (6R)-10-formyltetrahydrofolate + H(+). It carries out the reaction (6R)-5,10-methylene-5,6,7,8-tetrahydrofolate + NADP(+) = (6R)-5,10-methenyltetrahydrofolate + NADPH. The protein operates within one-carbon metabolism; tetrahydrofolate interconversion. Bifunctional mitochondrial folate-interconverting enzyme that has both NAD/NADP-dependent methylenetetrahydrofolate dehydrogenase and methenyltetrahydrofolate cyclohydrolase activities. This Mus musculus (Mouse) protein is Bifunctional methylenetetrahydrofolate dehydrogenase/cyclohydrolase 2, mitochondrial.